The following is a 464-amino-acid chain: ATP synthase subunit beta (464 aa).

153–160 (GGAGVGKT) contributes to the ATP binding site.

Belongs to the ATPase alpha/beta chains family. F-type ATPases have 2 components, CF(1) - the catalytic core - and CF(0) - the membrane proton channel. CF(1) has five subunits: alpha(3), beta(3), gamma(1), delta(1), epsilon(1). CF(0) has three main subunits: a(1), b(2) and c(9-12). The alpha and beta chains form an alternating ring which encloses part of the gamma chain. CF(1) is attached to CF(0) by a central stalk formed by the gamma and epsilon chains, while a peripheral stalk is formed by the delta and b chains.

Its subcellular location is the cell inner membrane. The enzyme catalyses ATP + H2O + 4 H(+)(in) = ADP + phosphate + 5 H(+)(out). Functionally, produces ATP from ADP in the presence of a proton gradient across the membrane. The catalytic sites are hosted primarily by the beta subunits. The sequence is that of ATP synthase subunit beta from Burkholderia lata (strain ATCC 17760 / DSM 23089 / LMG 22485 / NCIMB 9086 / R18194 / 383).